The following is a 136-amino-acid chain: Large-conductance mechanosensitive channel (136 aa).

At 1–16 the chain is on the cytoplasmic side; that stretch reads MGLLSEFKAFAVKGNV. A helical transmembrane segment spans residues 17 to 45; the sequence is VDMAVGIIIGAAFGKIVSSFVGDVIMPPI. Over 46–73 the chain is Extracellular; that stretch reads GLLIGGVDFSDLAITLKAEGDVPAVVLA. The chain crosses the membrane as a helical span at residues 74-93; sequence YRKFIQTVLNFVIVAFAIFM. Topologically, residues 94-136 are cytoplasmic; the sequence is GVKAINRLKREEAVAPSEPPVPSAEETLLTEIRDLLKAQQNKS.

It belongs to the MscL family. Homopentamer.

The protein localises to the cell inner membrane. Channel that opens in response to stretch forces in the membrane lipid bilayer. Forms a nonselective ion channel with a conductance of about 4 nanosiemens. May participate in the regulation of osmotic pressure changes within the cell. This chain is Large-conductance mechanosensitive channel, found in Pseudomonas fluorescens.